A 93-amino-acid polypeptide reads, in one-letter code: MSITPSKKSELISEYRIKEGDTGSAYVQCAILSERIRNLTEHLRIHKKDYHCRRGLMVLVCKRRKRLQYIKNKYGSDLYLDLVKKLGIRDVFH.

This sequence belongs to the universal ribosomal protein uS15 family. Part of the 30S ribosomal subunit. Forms a bridge to the 50S subunit in the 70S ribosome, contacting the 23S rRNA.

In terms of biological role, one of the primary rRNA binding proteins, it binds directly to 16S rRNA where it helps nucleate assembly of the platform of the 30S subunit by binding and bridging several RNA helices of the 16S rRNA. Forms an intersubunit bridge (bridge B4) with the 23S rRNA of the 50S subunit in the ribosome. This Anaplasma phagocytophilum (strain HZ) protein is Small ribosomal subunit protein uS15.